Here is a 148-residue protein sequence, read N- to C-terminus: Deoxyuridine 5'-triphosphate nucleotidohydrolase (148 aa).

Substrate contacts are provided by residues 68 to 70 (RSG), N81, and 85 to 87 (TID).

The protein belongs to the dUTPase family. The cofactor is Mg(2+).

It carries out the reaction dUTP + H2O = dUMP + diphosphate + H(+). It participates in pyrimidine metabolism; dUMP biosynthesis; dUMP from dCTP (dUTP route): step 2/2. In terms of biological role, this enzyme is involved in nucleotide metabolism: it produces dUMP, the immediate precursor of thymidine nucleotides and it decreases the intracellular concentration of dUTP so that uracil cannot be incorporated into DNA. The sequence is that of Deoxyuridine 5'-triphosphate nucleotidohydrolase from Geobacter metallireducens (strain ATCC 53774 / DSM 7210 / GS-15).